We begin with the raw amino-acid sequence, 316 residues long: GPI-specific phospholipase A2-like PGAP3 (316 aa).

The N-terminal stretch at 1 to 18 (MAPFLVLFLAGVVAASRG) is a signal peptide. Over 19-93 (DREPVYRDCV…QFHGKWPFSR (75 aa)) the chain is Lumenal. An N-linked (GlcNAc...) asparagine glycan is attached at N35. The chain crosses the membrane as a helical span at residues 94 to 114 (FLFFQEPASALASFLNGVASL). The Cytoplasmic segment spans residues 115 to 132 (LMLLRYRSSVPSSCQMYR). A helical transmembrane segment spans residues 133–153 (TCLAFSMVSVNAWFWSTIFHT). Residues 154–163 (RDTALTEKMD) are Lumenal-facing. The chain crosses the membrane as a helical span at residues 164-180 (YFCASSVILHSIYLCCM). Over 181–182 (RT) the chain is Cytoplasmic. A helical membrane pass occupies residues 183 to 203 (FGLQYPSIANGFGAFLVLLFA). The Lumenal segment spans residues 204 to 218 (CHVSYLTLGRFDYSY). Residues 219-239 (NMAANTGFGVLNLMWWLAWCF) form a helical membrane-spanning segment. At 240–251 (RRRFHQPYLWKC) the chain is on the cytoplasmic side. Residues 252–272 (VLVVISLQSLALLELLDFPPV) form a helical membrane-spanning segment. M273 is a topological domain (lumenal). Residues 274 to 293 (WILDAHALWHFSTVPLHFLF) form a helical membrane-spanning segment. Residues 294–316 (YSFLKDDSLYLLKINHDDIPKLD) are Cytoplasmic-facing.

The protein belongs to the PGAP3 family.

It is found in the golgi apparatus membrane. Functionally, involved in the fatty acid remodeling steps of GPI-anchor maturation where the unsaturated acyl chain at sn-2 of inositol phosphate is replaced by a saturated stearoyl chain. May catalyze the first step of the fatty acid remodeling, by removing the unsaturated acyl chain at sn-2 of inositol phosphate, generating a lyso-GPI intermediate. The fatty acid remodeling steps is critical for the integration of GPI-APs into lipid rafts. The protein is GPI-specific phospholipase A2-like PGAP3 of Xenopus tropicalis (Western clawed frog).